Reading from the N-terminus, the 620-residue chain is 1-deoxy-D-xylulose-5-phosphate synthase (620 aa).

Residues histidine 80 and glycine 121–serine 123 each bind thiamine diphosphate. A Mg(2+)-binding site is contributed by aspartate 152. Residues glycine 153–alanine 154, asparagine 181, tyrosine 288, and glutamate 370 contribute to the thiamine diphosphate site. Asparagine 181 contributes to the Mg(2+) binding site.

It belongs to the transketolase family. DXPS subfamily. In terms of assembly, homodimer. Mg(2+) is required as a cofactor. Thiamine diphosphate serves as cofactor.

The catalysed reaction is D-glyceraldehyde 3-phosphate + pyruvate + H(+) = 1-deoxy-D-xylulose 5-phosphate + CO2. It participates in metabolic intermediate biosynthesis; 1-deoxy-D-xylulose 5-phosphate biosynthesis; 1-deoxy-D-xylulose 5-phosphate from D-glyceraldehyde 3-phosphate and pyruvate: step 1/1. Its function is as follows. Catalyzes the acyloin condensation reaction between C atoms 2 and 3 of pyruvate and glyceraldehyde 3-phosphate to yield 1-deoxy-D-xylulose-5-phosphate (DXP). This chain is 1-deoxy-D-xylulose-5-phosphate synthase, found in Salmonella paratyphi A (strain ATCC 9150 / SARB42).